The following is a 198-amino-acid chain: Uracil phosphoribosyltransferase homolog (198 aa).

This sequence belongs to the UPRTase family.

Its subcellular location is the plastid. It localises to the chloroplast. This Porphyra purpurea (Red seaweed) protein is Uracil phosphoribosyltransferase homolog.